A 408-amino-acid chain; its full sequence is Glutaryl-CoA dehydrogenase, mitochondrial (408 aa).

Residues 1–13 (KGGKTQGRSAKSS) constitute a mitochondrion transit peptide. Residues 107–108 (RS) and S156 contribute to the substrate site. FAD contacts are provided by residues 147–156 (FGLTEPNHGS), S156, and 182–184 (WIT). K210 carries the N6-acetyllysine modification. 257 to 264 (FGCLNNAR) lines the substrate pocket. Residues R289, Q300, and 357-361 (DMLGG) contribute to the FAD site. Catalysis depends on E384, which acts as the Proton acceptor. Residue G385 coordinates substrate. FAD-binding positions include T386, 386-388 (THD), and F404.

This sequence belongs to the acyl-CoA dehydrogenase family. As to quaternary structure, homotetramer. Requires FAD as cofactor.

The protein resides in the mitochondrion matrix. The catalysed reaction is glutaryl-CoA + oxidized [electron-transfer flavoprotein] + 2 H(+) = (2E)-butenoyl-CoA + reduced [electron-transfer flavoprotein] + CO2. It participates in amino-acid metabolism; lysine degradation. The protein operates within amino-acid metabolism; tryptophan metabolism. Catalyzes the oxidative decarboxylation of glutaryl-CoA to crotonyl-CoA and CO(2) in the degradative pathway of L-lysine, L-hydroxylysine, and L-tryptophan metabolism. It uses electron transfer flavoprotein as its electron acceptor. The chain is Glutaryl-CoA dehydrogenase, mitochondrial (GCDH) from Sus scrofa (Pig).